We begin with the raw amino-acid sequence, 118 residues long: Large ribosomal subunit protein bL20 (118 aa).

Belongs to the bacterial ribosomal protein bL20 family.

In terms of biological role, binds directly to 23S ribosomal RNA and is necessary for the in vitro assembly process of the 50S ribosomal subunit. It is not involved in the protein synthesizing functions of that subunit. The sequence is that of Large ribosomal subunit protein bL20 from Thermosipho africanus (strain TCF52B).